Consider the following 63-residue polypeptide: Large ribosomal subunit protein bL28 (63 aa).

The tract at residues 1-22 (MSRRCAITGKSAMNGHSVSHAN) is disordered.

This sequence belongs to the bacterial ribosomal protein bL28 family.

This is Large ribosomal subunit protein bL28 from Campylobacter hominis (strain ATCC BAA-381 / DSM 21671 / CCUG 45161 / LMG 19568 / NCTC 13146 / CH001A).